We begin with the raw amino-acid sequence, 543 residues long: MSMFCFQCQETAKGTGCILSGVCGKTPEVANMQDLLLFVVRGIAVYNQALRKDGRSSARADKFIFDALFTTITNANFDKHSIIEKIKKGLELKKDLSNQVTIEHAPDECTWYGDETEFEEKAQTVGVLRTSDEDIRSLKELVHYGIKGMAAYVEHAYNLGYENPEIFAFMQYALAELTREDITVDELITLTLATGNHGVQAMAQLDTANTSHYGNPEISEVNIGVRNNPGILVSGHDLKDIEELLQQTEGTGIDIYTHSEMLPAHYYPQLKKYKHLAGNYGNAWWKQKEEFESFNGPILFTTNCIVPPRPNATYKDRIYTTGATGLEGATYIPERKDGKQKDFSVIIEHARRCQPPVAIESGKIVGGFAHAQVIALADKVVEAVKSGAIRKFFVMAGCDGRMKSRSYYTEFAEKLPADTVILTAGCAKYRYNKLPLGDINGIPRVLDAGQCNDSYSLAIIAMKLQEVFGLKDINDLPIVYNIAWYEQKAVIVLLALLALGVKKIHLGPTLPAFLSPNVKQVLIDNFGIGGISTADEDIAKFLA.

Residues Cys5, Cys8, Cys17, and Cys23 each coordinate [4Fe-4S] cluster. Positions 236, 260, 304, 398, 426, 451, 486, and 488 each coordinate hybrid [4Fe-2O-2S] cluster. The residue at position 398 (Cys398) is a Cysteine persulfide.

It belongs to the HCP family. The cofactor is [4Fe-4S] cluster. Requires hybrid [4Fe-2O-2S] cluster as cofactor.

Its subcellular location is the cytoplasm. The catalysed reaction is A + NH4(+) + H2O = hydroxylamine + AH2 + H(+). In terms of biological role, catalyzes the reduction of hydroxylamine to form NH(3) and H(2)O. The polypeptide is Hydroxylamine reductase (Bacteroides fragilis (strain YCH46)).